We begin with the raw amino-acid sequence, 449 residues long: Phosphoglucosamine mutase (449 aa).

The active-site Phosphoserine intermediate is the S101. 4 residues coordinate Mg(2+): S101, D243, D245, and D247. Phosphoserine is present on S101.

It belongs to the phosphohexose mutase family. The cofactor is Mg(2+). In terms of processing, activated by phosphorylation.

The catalysed reaction is alpha-D-glucosamine 1-phosphate = D-glucosamine 6-phosphate. Its function is as follows. Catalyzes the conversion of glucosamine-6-phosphate to glucosamine-1-phosphate. The protein is Phosphoglucosamine mutase of Syntrophobacter fumaroxidans (strain DSM 10017 / MPOB).